The following is a 430-amino-acid chain: Enolase (430 aa).

Position 167 (glutamine 167) interacts with (2R)-2-phosphoglycerate. Residue glutamate 209 is the Proton donor of the active site. Residues aspartate 246, glutamate 289, and aspartate 316 each coordinate Mg(2+). Residues lysine 341, arginine 370, serine 371, and lysine 392 each contribute to the (2R)-2-phosphoglycerate site. Lysine 341 functions as the Proton acceptor in the catalytic mechanism.

The protein belongs to the enolase family. In terms of assembly, component of the RNA degradosome, a multiprotein complex involved in RNA processing and mRNA degradation. Mg(2+) serves as cofactor.

It localises to the cytoplasm. The protein localises to the secreted. The protein resides in the cell surface. The enzyme catalyses (2R)-2-phosphoglycerate = phosphoenolpyruvate + H2O. Its pathway is carbohydrate degradation; glycolysis; pyruvate from D-glyceraldehyde 3-phosphate: step 4/5. Functionally, catalyzes the reversible conversion of 2-phosphoglycerate (2-PG) into phosphoenolpyruvate (PEP). It is essential for the degradation of carbohydrates via glycolysis. This chain is Enolase, found in Alteromonas mediterranea (strain DSM 17117 / CIP 110805 / LMG 28347 / Deep ecotype).